The sequence spans 789 residues: Homocitrate dehydratase, mitochondrial (789 aa).

The N-terminal 14 residues, 1–14 (MLSSANRFYIKRHL), are a transit peptide targeting the mitochondrion. Substrate is bound by residues Q96 and 189–191 (DSH). [4Fe-4S] cluster-binding residues include C385, C448, and C451. Substrate contacts are provided by residues R476, R481, K610, and 672 to 673 (AR).

It belongs to the aconitase/IPM isomerase family. [4Fe-4S] cluster serves as cofactor.

Its subcellular location is the mitochondrion. It carries out the reaction (2R)-homocitrate = cis-homoaconitate + H2O. It functions in the pathway amino-acid biosynthesis; L-lysine biosynthesis via AAA pathway; L-alpha-aminoadipate from 2-oxoglutarate: step 2/5. Its function is as follows. Catalyzes the reversible dehydration of (R)-homocitrate to cis-homoaconitate, a step in the alpha-aminoadipate pathway for lysine biosynthesis. The sequence is that of Homocitrate dehydratase, mitochondrial (ACO2) from Saccharomyces cerevisiae (strain ATCC 204508 / S288c) (Baker's yeast).